A 1212-amino-acid chain; its full sequence is uncharacterized protein (1212 aa).

The disordered stretch occupies residues 783–802 (TRQDASGGSSSGTKKGEKLQ).

This is an uncharacterized protein from Human herpesvirus 6B (strain Z29) (HHV-6 variant B).